The sequence spans 270 residues: Palmitoyltransferase ZDHHC12-A (270 aa).

The Cytoplasmic segment spans residues 1–8 (MNKSLFKS). The helical transmembrane segment at 9 to 29 (GCLVRTAHVILTWIITLILFL) threads the bilayer. The Lumenal segment spans residues 30–45 (HNTDLRRCQERGDLLQ). Residues 46-66 (PLVFSSVLLLSVLLYFTVSLM) traverse the membrane as a helical segment. Over 67 to 145 (DPGFVLSDSQ…DNCVGELNHR (79 aa)) the chain is Cytoplasmic. Positions 102–152 (RRCGYCFLLQPMRARHCKWCKRCVRRFDHHCPWIDNCVGELNHRWFLLYLC) constitute a DHHC domain. Catalysis depends on C132, which acts as the S-palmitoyl cysteine intermediate. The chain crosses the membrane as a helical span at residues 146–166 (WFLLYLCVQFTAVCWGLQSAW). Topologically, residues 167–182 (SGFISAPSWQQWFTQN) are lumenal. A helical transmembrane segment spans residues 183–203 (VFLLVAFAVTAVFSVVLLLLL). The Cytoplasmic portion of the chain corresponds to 204–270 (CIHAYLASVN…MYIRHNNASV (67 aa)).

It belongs to the DHHC palmitoyltransferase family.

The protein localises to the golgi apparatus membrane. Its subcellular location is the endoplasmic reticulum membrane. The catalysed reaction is L-cysteinyl-[protein] + hexadecanoyl-CoA = S-hexadecanoyl-L-cysteinyl-[protein] + CoA. In terms of biological role, palmitoyltransferase that catalyzes the addition of palmitate onto various protein substrates. Has a palmitoyltransferase activity toward gephyrin/GPHN, regulating its clustering at synapses and its function in gamma-aminobutyric acid receptor clustering. Acts as an inhibitor of the NLRP3 inflammasome by mediating palmitoylation of NLRP3, thereby promoting NLRP3 degradation by the chaperone-mediated autophagy (CMA) process. The polypeptide is Palmitoyltransferase ZDHHC12-A (Danio rerio (Zebrafish)).